Here is a 473-residue protein sequence, read N- to C-terminus: Proline transporter 1 (473 aa).

The segment covering 1–11 (MDQHQLDEENQ) has biased composition (basic and acidic residues). Residues 1–31 (MDQHQLDEENQRAALFHSSAPSSSLGADGEE) form a disordered region. 11 helical membrane passes run 65–85 (PWYQ…VLGY), 88–108 (SIMV…AAAI), 145–165 (LTWA…IILA), 188–208 (IALS…LSAL), 210–230 (IWLG…FVMS), 252–272 (IFTT…GMLP), 290–310 (LWFQ…MGYW), 333–353 (VANL…ASPM), 378–398 (VGVR…LPFL), 401–421 (FMSL…ANHM), and 437–457 (WHWL…VAAV).

This sequence belongs to the amino acid/polyamine transporter 2 family. Amino acid/auxin permease (AAAP) (TC 2.A.18.3) subfamily. As to expression, expressed in roots, leaf blades and sheaths, stems and young panicle.

Its subcellular location is the cell membrane. Functionally, proline transporter that mediates proline transport across the plasma membrane when expressed in a heterologous system (Xenopus oocytes). This chain is Proline transporter 1 (PROT1), found in Oryza sativa subsp. japonica (Rice).